The sequence spans 362 residues: Probable dual-specificity RNA methyltransferase RlmN (362 aa).

Glu91 (proton acceptor) is an active-site residue. Residues Gln97 to Arg329 enclose the Radical SAM core domain. Cys104 and Cys340 are disulfide-bonded. [4Fe-4S] cluster is bound by residues Cys111, Cys115, and Cys118. S-adenosyl-L-methionine is bound by residues Gly163–Glu164, Ser195, Ser218–His220, and Asn296. Cys340 (S-methylcysteine intermediate) is an active-site residue.

The protein belongs to the radical SAM superfamily. RlmN family. It depends on [4Fe-4S] cluster as a cofactor.

The protein localises to the cytoplasm. It catalyses the reaction adenosine(2503) in 23S rRNA + 2 reduced [2Fe-2S]-[ferredoxin] + 2 S-adenosyl-L-methionine = 2-methyladenosine(2503) in 23S rRNA + 5'-deoxyadenosine + L-methionine + 2 oxidized [2Fe-2S]-[ferredoxin] + S-adenosyl-L-homocysteine. The enzyme catalyses adenosine(37) in tRNA + 2 reduced [2Fe-2S]-[ferredoxin] + 2 S-adenosyl-L-methionine = 2-methyladenosine(37) in tRNA + 5'-deoxyadenosine + L-methionine + 2 oxidized [2Fe-2S]-[ferredoxin] + S-adenosyl-L-homocysteine. In terms of biological role, specifically methylates position 2 of adenine 2503 in 23S rRNA and position 2 of adenine 37 in tRNAs. In Streptococcus sanguinis (strain SK36), this protein is Probable dual-specificity RNA methyltransferase RlmN.